The sequence spans 562 residues: Potassium-transporting ATPase potassium-binding subunit (562 aa).

12 helical membrane passes run 5–25, 63–83, 132–152, 175–195, 250–270, 279–299, 327–347, 356–376, 379–399, 416–436, 483–503, and 526–546; these read AFLLIFGLLLTVLIVAQPLGS, AAAILTLNLIGIVVLFVLLMA, GLTVQNFLAAASGIAVAFALI, LYVLLPLSLLLALFFVSQGVL, LSNIVQMLAILLIPTALCFAF, QGHALLWAMGLIFIVAAAVVM, FGVLTSSLYAVVTTATSTGAV, ALGGMVPMWLMQIGEVVFGGV, GLYGMLLFVLLTVFIAGLMIG, MTALAILIPPALVLLGTALAL, VLLAVAMLLGRFAVMVPVLAI, and LFIGMLIAIVLLIGALTFIPA.

This sequence belongs to the KdpA family. In terms of assembly, the system is composed of three essential subunits: KdpA, KdpB and KdpC.

It is found in the cell inner membrane. In terms of biological role, part of the high-affinity ATP-driven potassium transport (or Kdp) system, which catalyzes the hydrolysis of ATP coupled with the electrogenic transport of potassium into the cytoplasm. This subunit binds the periplasmic potassium ions and delivers the ions to the membrane domain of KdpB through an intramembrane tunnel. This is Potassium-transporting ATPase potassium-binding subunit from Pectobacterium carotovorum subsp. carotovorum (strain PC1).